The chain runs to 79 residues: RNA-binding protein KhpA (79 aa).

Positions 30–79 (GRVLEVRVHPDDLGKVIGRNGRTARALRTVVGAIGGRGVRVDLVDVDHVR) constitute a KH domain.

This sequence belongs to the KhpA RNA-binding protein family.

Its subcellular location is the cytoplasm. It is found in the nucleoid. Functionally, a probable RNA-binding protein. The sequence is that of RNA-binding protein KhpA from Streptomyces coelicolor (strain ATCC BAA-471 / A3(2) / M145).